The following is a 444-amino-acid chain: Putative cytochrome P450 120 (444 aa).

C391 provides a ligand contact to heme.

Belongs to the cytochrome P450 family. The cofactor is heme.

The chain is Putative cytochrome P450 120 (cyp120) from Synechocystis sp. (strain ATCC 27184 / PCC 6803 / Kazusa).